A 425-amino-acid polypeptide reads, in one-letter code: Serine--tRNA ligase (425 aa).

Position 232–234 (232–234 (TAE)) interacts with L-serine. ATP is bound by residues 263–265 (RRE) and valine 279. Position 286 (glutamate 286) interacts with L-serine. 350-353 (EVVS) is an ATP binding site. L-serine is bound at residue threonine 387.

This sequence belongs to the class-II aminoacyl-tRNA synthetase family. Type-1 seryl-tRNA synthetase subfamily. As to quaternary structure, homodimer. The tRNA molecule binds across the dimer.

It is found in the cytoplasm. The catalysed reaction is tRNA(Ser) + L-serine + ATP = L-seryl-tRNA(Ser) + AMP + diphosphate + H(+). The enzyme catalyses tRNA(Sec) + L-serine + ATP = L-seryl-tRNA(Sec) + AMP + diphosphate + H(+). It participates in aminoacyl-tRNA biosynthesis; selenocysteinyl-tRNA(Sec) biosynthesis; L-seryl-tRNA(Sec) from L-serine and tRNA(Sec): step 1/1. Functionally, catalyzes the attachment of serine to tRNA(Ser). Is also able to aminoacylate tRNA(Sec) with serine, to form the misacylated tRNA L-seryl-tRNA(Sec), which will be further converted into selenocysteinyl-tRNA(Sec). The chain is Serine--tRNA ligase from Methanocorpusculum labreanum (strain ATCC 43576 / DSM 4855 / Z).